The following is a 69-amino-acid chain: uncharacterized protein (69 aa).

A CHCH domain is found at 6–56 (SEECTPAKKKYDACFNDWYANKFLKGDLHNRDCDELFAEYKSCLLKALKTK). 2 short sequence motifs (cx9C motif) span residues 9-19 (CTPAKKKYDAC) and 38-48 (CDELFAEYKSC). 2 cysteine pairs are disulfide-bonded: cysteine 9-cysteine 48 and cysteine 19-cysteine 38.

The protein belongs to the TRIAP1/MDM35 family.

This is an uncharacterized protein from Schizosaccharomyces pombe (strain 972 / ATCC 24843) (Fission yeast).